The chain runs to 137 residues: Large ribosomal subunit protein uL16 (137 aa).

It belongs to the universal ribosomal protein uL16 family. Part of the 50S ribosomal subunit.

Its function is as follows. Binds 23S rRNA and is also seen to make contacts with the A and possibly P site tRNAs. The chain is Large ribosomal subunit protein uL16 from Nitrobacter hamburgensis (strain DSM 10229 / NCIMB 13809 / X14).